Consider the following 371-residue polypeptide: Chaperone protein DnaJ (371 aa).

The J domain occupies 4–68 (DYYQILGVSK…QKRAAYDRFG (65 aa)). Residues 134–212 (GIEKNISFSS…CHGMGRYHKQ (79 aa)) form a CR-type zinc finger. The Zn(2+) site is built by C147, C150, C164, C167, C186, C189, C200, and C203. CXXCXGXG motif repeat units follow at residues 147–154 (CDTCHGTG), 164–171 (CDACGGVG), 186–193 (CHKCQGNG), and 200–207 (CKKCHGMG).

The protein belongs to the DnaJ family. In terms of assembly, homodimer. Zn(2+) is required as a cofactor.

Its subcellular location is the cytoplasm. Participates actively in the response to hyperosmotic and heat shock by preventing the aggregation of stress-denatured proteins and by disaggregating proteins, also in an autonomous, DnaK-independent fashion. Unfolded proteins bind initially to DnaJ; upon interaction with the DnaJ-bound protein, DnaK hydrolyzes its bound ATP, resulting in the formation of a stable complex. GrpE releases ADP from DnaK; ATP binding to DnaK triggers the release of the substrate protein, thus completing the reaction cycle. Several rounds of ATP-dependent interactions between DnaJ, DnaK and GrpE are required for fully efficient folding. Also involved, together with DnaK and GrpE, in the DNA replication of plasmids through activation of initiation proteins. The chain is Chaperone protein DnaJ from Rickettsia felis (strain ATCC VR-1525 / URRWXCal2) (Rickettsia azadi).